Reading from the N-terminus, the 408-residue chain is Dual-specificity RNA methyltransferase RlmN (408 aa).

The active-site Proton acceptor is the E120. Residues 126 to 375 (EEGRGTLCIS…IRTPRGRDIL (250 aa)) enclose the Radical SAM core domain. Cysteines 133 and 378 form a disulfide. Positions 140, 144, and 147 each coordinate [4Fe-4S] cluster. S-adenosyl-L-methionine contacts are provided by residues 204 to 205 (GE), S236, 258 to 260 (SLH), and N335. Catalysis depends on C378, which acts as the S-methylcysteine intermediate.

The protein belongs to the radical SAM superfamily. RlmN family. [4Fe-4S] cluster serves as cofactor.

It is found in the cytoplasm. It carries out the reaction adenosine(2503) in 23S rRNA + 2 reduced [2Fe-2S]-[ferredoxin] + 2 S-adenosyl-L-methionine = 2-methyladenosine(2503) in 23S rRNA + 5'-deoxyadenosine + L-methionine + 2 oxidized [2Fe-2S]-[ferredoxin] + S-adenosyl-L-homocysteine. It catalyses the reaction adenosine(37) in tRNA + 2 reduced [2Fe-2S]-[ferredoxin] + 2 S-adenosyl-L-methionine = 2-methyladenosine(37) in tRNA + 5'-deoxyadenosine + L-methionine + 2 oxidized [2Fe-2S]-[ferredoxin] + S-adenosyl-L-homocysteine. Functionally, specifically methylates position 2 of adenine 2503 in 23S rRNA and position 2 of adenine 37 in tRNAs. m2A2503 modification seems to play a crucial role in the proofreading step occurring at the peptidyl transferase center and thus would serve to optimize ribosomal fidelity. The sequence is that of Dual-specificity RNA methyltransferase RlmN from Rhizobium leguminosarum bv. trifolii (strain WSM2304).